A 934-amino-acid polypeptide reads, in one-letter code: DNA topoisomerase 1 (934 aa).

The tract at residues 1–20 (MADPKTKGRGSGGNGSGRRL) is disordered. The region spanning 18–142 (RRLVIVESPT…VKRMVFHEIT (125 aa)) is the Toprim domain. Glu24 and Asp111 together coordinate Mg(2+). Positions 157–616 (DIDLVDAQET…FYFGGDHGVP (460 aa)) constitute a Topo IA-type catalytic domain. An interaction with DNA region spans residues 191 to 196 (SAGRVQ). Tyr342 acts as the O-(5'-phospho-DNA)-tyrosine intermediate in catalysis. Disordered regions lie at residues 746-765 (AAQGVKKRQKAAGPKPRTGS), 842-892 (KRRG…KGDD), and 905-934 (LADRRARGPAKRPARKAARKVPAKKAAKRD). The segment covering 911–934 (RGPAKRPARKAARKVPAKKAAKRD) has biased composition (basic residues).

The protein belongs to the type IA topoisomerase family. In terms of assembly, monomer. It depends on Mg(2+) as a cofactor.

The catalysed reaction is ATP-independent breakage of single-stranded DNA, followed by passage and rejoining.. Functionally, releases the supercoiling and torsional tension of DNA, which is introduced during the DNA replication and transcription, by transiently cleaving and rejoining one strand of the DNA duplex. Introduces a single-strand break via transesterification at a target site in duplex DNA. The scissile phosphodiester is attacked by the catalytic tyrosine of the enzyme, resulting in the formation of a DNA-(5'-phosphotyrosyl)-enzyme intermediate and the expulsion of a 3'-OH DNA strand. The free DNA strand then undergoes passage around the unbroken strand, thus removing DNA supercoils. Finally, in the religation step, the DNA 3'-OH attacks the covalent intermediate to expel the active-site tyrosine and restore the DNA phosphodiester backbone. This chain is DNA topoisomerase 1, found in Mycobacterium bovis (strain ATCC BAA-935 / AF2122/97).